The sequence spans 1253 residues: Cytoplasmic FMR1-interacting protein 2 (1253 aa).

Belongs to the CYFIP family.

The protein localises to the cytoplasm. In terms of biological role, involved in T-cell adhesion and p53-dependent induction of apoptosis. Does not bind RNA. The polypeptide is Cytoplasmic FMR1-interacting protein 2 (cyfip2) (Xenopus laevis (African clawed frog)).